The chain runs to 616 residues: Proline--tRNA ligase (616 aa).

This sequence belongs to the class-II aminoacyl-tRNA synthetase family. ProS type 1 subfamily. In terms of assembly, homodimer.

The protein localises to the cytoplasm. It carries out the reaction tRNA(Pro) + L-proline + ATP = L-prolyl-tRNA(Pro) + AMP + diphosphate. In terms of biological role, catalyzes the attachment of proline to tRNA(Pro) in a two-step reaction: proline is first activated by ATP to form Pro-AMP and then transferred to the acceptor end of tRNA(Pro). As ProRS can inadvertently accommodate and process non-cognate amino acids such as alanine and cysteine, to avoid such errors it has two additional distinct editing activities against alanine. One activity is designated as 'pretransfer' editing and involves the tRNA(Pro)-independent hydrolysis of activated Ala-AMP. The other activity is designated 'posttransfer' editing and involves deacylation of mischarged Ala-tRNA(Pro). The misacylated Cys-tRNA(Pro) is not edited by ProRS. The polypeptide is Proline--tRNA ligase (Streptococcus gordonii (strain Challis / ATCC 35105 / BCRC 15272 / CH1 / DL1 / V288)).